Here is a 282-residue protein sequence, read N- to C-terminus: Glutamate racemase (282 aa).

Substrate is bound by residues 13–14 and 45–46; these read DS and YG. Cys76 serves as the catalytic Proton donor/acceptor. Substrate is bound at residue 77 to 78; sequence NT. The Proton donor/acceptor role is filled by Cys186. A substrate-binding site is contributed by 187-188; the sequence is TH.

Belongs to the aspartate/glutamate racemases family.

The catalysed reaction is L-glutamate = D-glutamate. The protein operates within cell wall biogenesis; peptidoglycan biosynthesis. Provides the (R)-glutamate required for cell wall biosynthesis. The polypeptide is Glutamate racemase (Ralstonia pickettii (strain 12J)).